Consider the following 443-residue polypeptide: C4-dicarboxylate transport protein (443 aa).

9 helical membrane passes run 17-37, 57-77, 92-112, 139-159, 161-181, 201-221, 234-254, 320-340, and 368-388; these read PFYS…ILLG, LVKM…IAGM, LYFL…ANVV, EQSI…GAFA, GDIL…AMVG, LVGI…AFTI, MLIG…LGAV, IYMT…LSWG, and AATL…ILGI.

It belongs to the dicarboxylate/amino acid:cation symporter (DAACS) (TC 2.A.23) family.

The protein localises to the cell inner membrane. Its function is as follows. Responsible for the transport of dicarboxylates such as succinate, fumarate, and malate from the periplasm across the membrane. The chain is C4-dicarboxylate transport protein from Rhizobium etli (strain ATCC 51251 / DSM 11541 / JCM 21823 / NBRC 15573 / CFN 42).